We begin with the raw amino-acid sequence, 256 residues long: Thiazole synthase (256 aa).

The active-site Schiff-base intermediate with DXP is Lys97. 1-deoxy-D-xylulose 5-phosphate is bound by residues Gly158, 184–185 (AG), and 206–207 (NT).

This sequence belongs to the ThiG family. Homotetramer. Forms heterodimers with either ThiH or ThiS.

The protein localises to the cytoplasm. The catalysed reaction is [ThiS sulfur-carrier protein]-C-terminal-Gly-aminoethanethioate + 2-iminoacetate + 1-deoxy-D-xylulose 5-phosphate = [ThiS sulfur-carrier protein]-C-terminal Gly-Gly + 2-[(2R,5Z)-2-carboxy-4-methylthiazol-5(2H)-ylidene]ethyl phosphate + 2 H2O + H(+). The protein operates within cofactor biosynthesis; thiamine diphosphate biosynthesis. Catalyzes the rearrangement of 1-deoxy-D-xylulose 5-phosphate (DXP) to produce the thiazole phosphate moiety of thiamine. Sulfur is provided by the thiocarboxylate moiety of the carrier protein ThiS. In vitro, sulfur can be provided by H(2)S. This is Thiazole synthase from Pelotomaculum thermopropionicum (strain DSM 13744 / JCM 10971 / SI).